Here is a 531-residue protein sequence, read N- to C-terminus: Importin subunit alpha-3 (531 aa).

Residues 1 to 58 form the IBB domain; the sequence is MSLRPSAKTEVRRNRYKVAVDAEEGRRRREDNLVEIRKNKREENLQKKRFTSSMAFGS. 8 ARM repeats span residues 111 to 153, 154 to 198, 199 to 236, 237 to 281, 282 to 321, 322 to 364, 365 to 405, and 406 to 447; these read INEV…TSEN, TNVI…CRDL, VLSYGAMTPLLSQFNENTKLSMLRNATWTLSNFCRGKP, PPAF…DKIQ, AVIEAGVVPRLIQLLGHSSPSVLIPALRTIGNIVTGDDLQ, TQMV…NADQ, IQAV…GGTH, and DQIK…VVGE. Residues 500–524 form a disordered region; sequence DNEEEGNDENHAPQSGFQFGSTNVP. Positions 511 to 524 are enriched in polar residues; sequence APQSGFQFGSTNVP.

The protein belongs to the importin alpha family. In terms of assembly, forms a complex with importin subunit beta-1. Interacts with PRL1. Interacts with A.tumefaciens VirD2 and VirE2.

The protein localises to the nucleus. In terms of biological role, binds to conventional NLS motifs and mediates nuclear protein import across the nuclear envelope. Acts as a cellular receptor for the nuclear import of the virD2 protein of Agrobacterium, but is not essential for Agrobacterium-mediated root transformation. May be involved in the regulation of pathogen-induced salicylic acid accumulation. This Arabidopsis thaliana (Mouse-ear cress) protein is Importin subunit alpha-3.